The following is a 288-amino-acid chain: Cyclin-dependent kinase 2 homolog (288 aa).

Positions 4–284 constitute a Protein kinase domain; the sequence is YHGLEKIGEG…AKQALEHAYF (281 aa). Residues 10–18 and Lys32 contribute to the ATP site; that span reads IGEGTYGVV. Phosphothreonine is present on Thr14. Phosphotyrosine is present on Tyr15. Asp125 (proton acceptor) is an active-site residue. Position 158 is a phosphothreonine (Thr158).

It belongs to the protein kinase superfamily. CMGC Ser/Thr protein kinase family. CDC2/CDKX subfamily. As to quaternary structure, may form a complex composed of at least the catalytic subunit CRK2 and a cyclin. Requires Mg(2+) as cofactor.

Its subcellular location is the cytoplasm. The catalysed reaction is L-seryl-[protein] + ATP = O-phospho-L-seryl-[protein] + ADP + H(+). It catalyses the reaction L-threonyl-[protein] + ATP = O-phospho-L-threonyl-[protein] + ADP + H(+). The enzyme catalyses [DNA-directed RNA polymerase] + ATP = phospho-[DNA-directed RNA polymerase] + ADP + H(+). Phosphorylation at Thr-14 or Tyr-15 inactivates the enzyme, while phosphorylation at Thr-158 activates it. Functionally, serine/threonine-protein kinase. Involved in the control of the cell cycle. Required for entry into S-phase and mitosis. Probable component of the kinase complex that phosphorylates the repetitive C-terminus of RNA polymerase II. The sequence is that of Cyclin-dependent kinase 2 homolog from Plasmodium vivax.